The primary structure comprises 60 residues: UPF0434 protein PC1_1771 (60 aa).

This sequence belongs to the UPF0434 family.

The chain is UPF0434 protein PC1_1771 from Pectobacterium carotovorum subsp. carotovorum (strain PC1).